The primary structure comprises 213 residues: U1 small nuclear ribonucleoprotein C (213 aa).

The segment at 4 to 36 (YYCDYCDTYLTHDSPSVRKQHNAGYKHKANVRS) adopts a Matrin-type zinc-finger fold. Positions 143-166 (APSMPMPPLNSLPRPPTMNVPPAV) are enriched in pro residues. The segment at 143 to 213 (APSMPMPPLN…INAQGPEANH (71 aa)) is disordered. The segment covering 167–180 (PGSTSTPTSGGAPS) has biased composition (low complexity).

It belongs to the U1 small nuclear ribonucleoprotein C family. U1 snRNP is composed of the 7 core Sm proteins B/B', D1, D2, D3, E, F and G that assemble in a heptameric protein ring on the Sm site of the small nuclear RNA to form the core snRNP, and at least 3 U1 snRNP-specific proteins U1-70K, U1-A and U1-C. U1-C interacts with U1 snRNA and the 5' splice-site region of the pre-mRNA.

It localises to the nucleus. In terms of biological role, component of the spliceosomal U1 snRNP, which is essential for recognition of the pre-mRNA 5' splice-site and the subsequent assembly of the spliceosome. U1-C is directly involved in initial 5' splice-site recognition for both constitutive and regulated alternative splicing. The interaction with the 5' splice-site seems to precede base-pairing between the pre-mRNA and the U1 snRNA. Stimulates commitment or early (E) complex formation by stabilizing the base pairing of the 5' end of the U1 snRNA and the 5' splice-site region. This is U1 small nuclear ribonucleoprotein C from Vitis vinifera (Grape).